The sequence spans 31 residues: Cytochrome b6-f complex subunit 6 (31 aa).

The chain crosses the membrane as a helical span at residues 5-25 (ISYLGILVGALLFVTITFLTL).

It belongs to the PetL family. As to quaternary structure, the 4 large subunits of the cytochrome b6-f complex are cytochrome b6, subunit IV (17 kDa polypeptide, PetD), cytochrome f and the Rieske protein, while the 4 small subunits are PetG, PetL, PetM and PetN. The complex functions as a dimer.

It is found in the plastid. The protein resides in the chloroplast thylakoid membrane. In terms of biological role, component of the cytochrome b6-f complex, which mediates electron transfer between photosystem II (PSII) and photosystem I (PSI), cyclic electron flow around PSI, and state transitions. PetL is important for photoautotrophic growth as well as for electron transfer efficiency and stability of the cytochrome b6-f complex. This chain is Cytochrome b6-f complex subunit 6, found in Chlorokybus atmophyticus (Soil alga).